We begin with the raw amino-acid sequence, 200 residues long: Ras-related protein Rab-10 (200 aa).

Residues Ser18, Gly19, Val20, Gly21, Lys22, Thr23, Cys24, Asn35, Thr36, Ser40, and Thr41 each coordinate GTP. A Mg(2+)-binding site is contributed by Thr23. Short sequence motifs (switch) lie at residues 32–46 and 64–81; these read DAFN…GIDF and DTAG…YYRG. Positions 41 and 64 each coordinate Mg(2+). Residues Gly67, Asn122, Lys123, Asp125, Met126, Ser152, Ala153, and Lys154 each contribute to the GTP site. The interval 181–200 is disordered; sequence RENVDISTTGGGTGLKKCCS. S-geranylgeranyl cysteine attachment occurs at residues Cys198 and Cys199.

This sequence belongs to the small GTPase superfamily. Rab family. Mg(2+) is required as a cofactor.

The protein localises to the cytoplasmic vesicle membrane. It is found in the golgi apparatus. It localises to the trans-Golgi network membrane. Its subcellular location is the endosome membrane. The protein resides in the recycling endosome membrane. The protein localises to the cytoplasmic vesicle. It is found in the phagosome membrane. It localises to the cell projection. Its subcellular location is the cilium. The protein resides in the endoplasmic reticulum membrane. It carries out the reaction GTP + H2O = GDP + phosphate + H(+). Regulated by guanine nucleotide exchange factors (GEFs) which promote the exchange of bound GDP for free GTP. Regulated by GTPase activating proteins (GAPs) which increase the GTP hydrolysis activity. Inhibited by GDP dissociation inhibitors (GDIs) which prevent Rab-GDP dissociation. Its function is as follows. The small GTPases Rab are key regulators of intracellular membrane trafficking, from the formation of transport vesicles to their fusion with membranes. Rabs cycle between an inactive GDP-bound form and an active GTP-bound form that is able to recruit to membranes different set of downstream effectors directly responsible for vesicle formation, movement, tethering and fusion. That Rab is mainly involved in the biosynthetic transport of proteins from the Golgi to the plasma membrane. Also plays a specific role in asymmetric protein transport to the plasma membrane within the polarized neuron and epithelial cells. In neurons, it is involved in axonogenesis through regulation of vesicular membrane trafficking toward the axonal plasma membrane while in epithelial cells, it regulates transport from the Golgi to the basolateral membrane. Moreover, may play a role in the basolateral recycling pathway and in phagosome maturation. Finally, may play a role in endoplasmic reticulum dynamics and morphology controlling tubulation along microtubules and tubules fusion. May participate in the export of neosynthesized proteins through a Rab-dependent endosomal export route. The protein is Ras-related protein Rab-10 of Diplobatis ommata (Ocellated electric ray).